A 225-amino-acid chain; its full sequence is Isoprenyl transferase 1 (225 aa).

Aspartate 3 is an active-site residue. Residue aspartate 3 coordinates Mg(2+). Substrate-binding positions include 4 to 7 (GNRR), tryptophan 8, histidine 21, and 49 to 51 (SME). Asparagine 52 acts as the Proton acceptor in catalysis. Substrate-binding positions include arginine 55, arginine 174, and 180 to 182 (RLS). Residue glutamate 193 coordinates Mg(2+).

This sequence belongs to the UPP synthase family. In terms of assembly, homodimer. Mg(2+) serves as cofactor.

Its function is as follows. Catalyzes the condensation of isopentenyl diphosphate (IPP) with allylic pyrophosphates generating different type of terpenoids. This Corynebacterium glutamicum (strain ATCC 13032 / DSM 20300 / JCM 1318 / BCRC 11384 / CCUG 27702 / LMG 3730 / NBRC 12168 / NCIMB 10025 / NRRL B-2784 / 534) protein is Isoprenyl transferase 1.